Consider the following 79-residue polypeptide: Small ribosomal subunit protein bS18 (79 aa).

It belongs to the bacterial ribosomal protein bS18 family. Part of the 30S ribosomal subunit. Forms a tight heterodimer with protein bS6.

Binds as a heterodimer with protein bS6 to the central domain of the 16S rRNA, where it helps stabilize the platform of the 30S subunit. The protein is Small ribosomal subunit protein bS18 of Pseudarthrobacter chlorophenolicus (strain ATCC 700700 / DSM 12829 / CIP 107037 / JCM 12360 / KCTC 9906 / NCIMB 13794 / A6) (Arthrobacter chlorophenolicus).